Reading from the N-terminus, the 809-residue chain is LPS-assembly protein LptD (809 aa).

An N-terminal signal peptide occupies residues 1 to 22; the sequence is MRRALRLLPLPLSIAICLPAMA.

It belongs to the LptD family. Component of the lipopolysaccharide transport and assembly complex. Interacts with LptE and LptA.

The protein localises to the cell outer membrane. Its function is as follows. Together with LptE, is involved in the assembly of lipopolysaccharide (LPS) at the surface of the outer membrane. This is LPS-assembly protein LptD from Xanthomonas euvesicatoria pv. vesicatoria (strain 85-10) (Xanthomonas campestris pv. vesicatoria).